We begin with the raw amino-acid sequence, 278 residues long: Phosphonates import ATP-binding protein PhnC (278 aa).

Residues 25–273 enclose the ABC transporter domain; it reads LAVKGLVKAY…IIQDIYSDES (249 aa). 58-65 contacts ATP; that stretch reads GRSGAGKS.

It belongs to the ABC transporter superfamily. Phosphonates importer (TC 3.A.1.9.1) family. In terms of assembly, the complex is composed of two ATP-binding proteins (PhnC), two transmembrane proteins (PhnE) and a solute-binding protein (PhnD).

Its subcellular location is the cell inner membrane. It carries out the reaction phosphonate(out) + ATP + H2O = phosphonate(in) + ADP + phosphate + H(+). Its function is as follows. Part of the ABC transporter complex PhnCDE involved in phosphonates import. Responsible for energy coupling to the transport system. The chain is Phosphonates import ATP-binding protein PhnC from Yersinia pestis bv. Antiqua (strain Antiqua).